Reading from the N-terminus, the 56-residue chain is Preprotein translocase subunit SecG (56 aa).

Topologically, residues methionine 1–serine 30 are cytoplasmic. The chain crosses the membrane as a helical span at residues proline 31 to threonine 52. Residues serine 53–tyrosine 56 are Extracellular-facing.

Belongs to the SEC61-beta family. In terms of assembly, component of the protein translocase complex. Heterotrimer consisting of alpha (SecY), beta (SecG) and gamma (SecE) subunits. Can form oligomers of the heterotrimer.

It localises to the cell membrane. In terms of biological role, involved in protein export. The function of the beta subunit is unknown, but it may be involved in stabilization of the trimeric complex. The polypeptide is Preprotein translocase subunit SecG (Methanosphaera stadtmanae (strain ATCC 43021 / DSM 3091 / JCM 11832 / MCB-3)).